The following is a 361-amino-acid chain: Phospho-N-acetylmuramoyl-pentapeptide-transferase (361 aa).

10 consecutive transmembrane segments (helical) span residues 27–47 (GALF…ISLL), 72–92 (TPTM…FLWA), 99–119 (VWIT…DDYL), 139–159 (ALIA…GLAY), 169–189 (AIVN…VGAG), 200–220 (GLAI…AYLV), 240–260 (LAVV…FNAP), 264–284 (IFMG…VAVA), 289–309 (IVLA…IIQV), and 338–358 (QVVI…LATL).

Belongs to the glycosyltransferase 4 family. MraY subfamily. Mg(2+) serves as cofactor.

The protein resides in the cell inner membrane. The enzyme catalyses UDP-N-acetyl-alpha-D-muramoyl-L-alanyl-gamma-D-glutamyl-meso-2,6-diaminopimeloyl-D-alanyl-D-alanine + di-trans,octa-cis-undecaprenyl phosphate = di-trans,octa-cis-undecaprenyl diphospho-N-acetyl-alpha-D-muramoyl-L-alanyl-D-glutamyl-meso-2,6-diaminopimeloyl-D-alanyl-D-alanine + UMP. The protein operates within cell wall biogenesis; peptidoglycan biosynthesis. Catalyzes the initial step of the lipid cycle reactions in the biosynthesis of the cell wall peptidoglycan: transfers peptidoglycan precursor phospho-MurNAc-pentapeptide from UDP-MurNAc-pentapeptide onto the lipid carrier undecaprenyl phosphate, yielding undecaprenyl-pyrophosphoryl-MurNAc-pentapeptide, known as lipid I. The polypeptide is Phospho-N-acetylmuramoyl-pentapeptide-transferase (Methylobacterium sp. (strain 4-46)).